Reading from the N-terminus, the 97-residue chain is RNA-binding protein Hfq (97 aa).

The Sm domain maps to 10-70; it reads DPFLNALRKE…ISTIVPARSV (61 aa). Residues 74–97 are disordered; the sequence is HENRPQAAPTSTLVQVETVQQPAE. Residues 81–97 are compositionally biased toward polar residues; that stretch reads APTSTLVQVETVQQPAE.

It belongs to the Hfq family. Homohexamer.

Its function is as follows. RNA chaperone that binds small regulatory RNA (sRNAs) and mRNAs to facilitate mRNA translational regulation in response to envelope stress, environmental stress and changes in metabolite concentrations. Also binds with high specificity to tRNAs. This Neisseria meningitidis serogroup A / serotype 4A (strain DSM 15465 / Z2491) protein is RNA-binding protein Hfq.